The chain runs to 523 residues: Keratin, type II cytoskeletal 71 (523 aa).

The head stretch occupies residues 1 to 129; that stretch reads MSRQFTCKSG…DPEIQKVRAQ (129 aa). A coil 1A region spans residues 130 to 165; sequence EREQIKALNNKFASFIDKVRFLEQQNQVLETKWELL. The IF rod domain occupies 130 to 443; it reads EREQIKALNN…KLLESEECRM (314 aa). The linker 1 stretch occupies residues 166–184; it reads QQLDLNNCKNNLEPILEGY. The segment at 185–276 is coil 1B; it reads ISNLRKQLET…CLFEAEITQI (92 aa). Positions 277–300 are linker 12; that stretch reads QSHISDMSVILSMDNNRNLDLDSI. The tract at residues 301–439 is coil 2; sequence IDEVRTQYEE…ATYRKLLESE (139 aa). The tail stretch occupies residues 440–523; it reads ECRMSGEFPS…LSAPSKKTSR (84 aa). The disordered stretch occupies residues 492-523; sequence GGEGRSRGSANDYKDTLGKGSSLSAPSKKTSR. Basic and acidic residues predominate over residues 493 to 508; the sequence is GEGRSRGSANDYKDTL. Positions 510–523 are enriched in polar residues; that stretch reads KGSSLSAPSKKTSR.

It belongs to the intermediate filament family. Heterodimer of a type I and a type II keratin. Associates with KRT16 and/or KRT17. Highly expressed in hair follicles from scalp. Specifically expressed in the inner root sheath (IRS) of the hair follicle. Present in the all 3 IRS layers: the cuticle, the Henle and the Huxley layers. Also detected in the pseudopods of specialized Huxley cells, termed Fluegelzellen, along the area of differentiated Henle cells (at protein level).

The protein resides in the cytoplasm. It is found in the cytoskeleton. Its function is as follows. Plays a central role in hair formation. Essential component of keratin intermediate filaments in the inner root sheath (IRS) of the hair follicle. The sequence is that of Keratin, type II cytoskeletal 71 (KRT71) from Homo sapiens (Human).